A 339-amino-acid polypeptide reads, in one-letter code: MAATNDPELTRRKQRQEDFLRGTSKINFDDHIDHCVLSGKTAIVTGGASGIGHGIAQALSSNGCKVAVLDLSGPLEAGTDESNIDSPKLFECDVSSWESLLAAFQEVLIWSGNSLDIVVLSAGVRSHNIKDLILERPAGSTSTPVKPPSSVFDVNLLGTYYSAYLALWYFTNLEAKRDEAEFNWKPQLLFIGSLASYVEQPLSADYCASKHGVRGLWKSVRSHSALFGDCQTNLLAPTFIDNRQGSTKSRGDGALISLTNDVKLGEVSDVVAGALRCLCDRNIEGRALCCVKGEQSSPGSNNFDLCDNLIDFNAGKSVLDSFRNGVVGRLGTQNTTGPQ.

The NADP(+) site is built by serine 49, isoleucine 51, aspartate 93, tyrosine 206, lysine 210, isoleucine 240, and glutamine 244. Catalysis depends on tyrosine 206, which acts as the Proton acceptor. Lysine 210 functions as the Lowers pKa of active site Tyr in the catalytic mechanism.

It belongs to the short-chain dehydrogenases/reductases (SDR) family. As to quaternary structure, homodimer.

It localises to the cytoplasm. It is found in the cytosol. It functions in the pathway secondary metabolite biosynthesis. In terms of biological role, NADP-dependent dehydrogenase; part of the gene cluster that mediates the biosynthesis of squalestatin S1 (SQS1, also known as zaragozic acid A), a heavily oxidized fungal polyketide that offers potent cholesterol lowering activity by targeting squalene synthase (SS). SQS1 is composed of a 2,8-dioxobicyclic[3.2.1]octane-3,4,5-tricarboxyclic acid core that is connected to two lipophilic polyketide arms. These initial steps feature the priming of an unusual benzoic acid starter unit onto the highly reducing polyketide synthase pks2, followed by oxaloacetate extension and product release to generate a tricarboxylic acid containing product. The phenylalanine ammonia lyase (PAL) M7 and the acyl-CoA ligase M9 are involved in transforming phenylalanine into benzoyl-CoA. The citrate synthase-like protein R3 is involved in connecting the C-alpha-carbons of the hexaketide chain and oxaloacetate to afford the tricarboxylic acid unit. The potential hydrolytic enzymes, M8 and M10, are in close proximity to pks2 and may participate in product release. On the other side, the tetraketide arm is synthesized by a the squalestatin tetraketide synthase pks1 and enzymatically esterified to the core in the last biosynthetic step, by the acetyltransferase M4. The biosynthesis of the tetraketide must involve 3 rounds of chain extension. After the first and second rounds methyl-transfer occurs, and in all rounds of extension the ketoreductase and dehydratase are active. The enoyl reductase and C-MeT of pks1 are not active in the final round of extension. The acetyltransferase M4 appears to have a broad substrate selectivity for its acyl CoA substrate, allowing the in vitro synthesis of novel squalestatins. The biosynthesis of SQS1 requires several oxidative steps likely performed by oxidoreductases M1, R1 and R2. Finally, in support of the identification of the cluster as being responsible for SQS1 production, the cluster contains a gene encoding a putative squalene synthase (SS) R6, suggesting a likely mechanism for self-resistance. This chain is NADP-dependent dehydrogenase M3, found in Phoma sp. (strain ATCC 20986 / MF5453).